Reading from the N-terminus, the 454-residue chain is Bifunctional protein GlmU (454 aa).

A pyrophosphorylase region spans residues 1 to 228; that stretch reads MSLKVIILAA…EMEVLGVNNK (228 aa). Residues 8-11, Lys-22, Gln-73, 78-79, 100-102, Gly-138, Glu-153, Asn-168, and Asn-226 contribute to the UDP-N-acetyl-alpha-D-glucosamine site; these read LAAG, GT, and YGD. Mg(2+) is bound at residue Asp-102. Residue Asn-226 participates in Mg(2+) binding. The interval 229-249 is linker; it reads SQLQSLERQYQAQLAEELMEQ. Residues 250–454 form an N-acetyltransferase region; that stretch reads GVTVLDASRI…IKGWQKPTKN (205 aa). 2 residues coordinate UDP-N-acetyl-alpha-D-glucosamine: Arg-332 and Lys-350. His-362 functions as the Proton acceptor in the catalytic mechanism. UDP-N-acetyl-alpha-D-glucosamine-binding residues include Tyr-365 and Asn-376. Acetyl-CoA contacts are provided by residues Ala-379, 385-386, Ser-404, Ala-422, and Arg-439; that span reads NY.

It in the N-terminal section; belongs to the N-acetylglucosamine-1-phosphate uridyltransferase family. The protein in the C-terminal section; belongs to the transferase hexapeptide repeat family. Homotrimer. It depends on Mg(2+) as a cofactor.

The protein resides in the cytoplasm. The catalysed reaction is alpha-D-glucosamine 1-phosphate + acetyl-CoA = N-acetyl-alpha-D-glucosamine 1-phosphate + CoA + H(+). It carries out the reaction N-acetyl-alpha-D-glucosamine 1-phosphate + UTP + H(+) = UDP-N-acetyl-alpha-D-glucosamine + diphosphate. It participates in nucleotide-sugar biosynthesis; UDP-N-acetyl-alpha-D-glucosamine biosynthesis; N-acetyl-alpha-D-glucosamine 1-phosphate from alpha-D-glucosamine 6-phosphate (route II): step 2/2. It functions in the pathway nucleotide-sugar biosynthesis; UDP-N-acetyl-alpha-D-glucosamine biosynthesis; UDP-N-acetyl-alpha-D-glucosamine from N-acetyl-alpha-D-glucosamine 1-phosphate: step 1/1. The protein operates within bacterial outer membrane biogenesis; LPS lipid A biosynthesis. Functionally, catalyzes the last two sequential reactions in the de novo biosynthetic pathway for UDP-N-acetylglucosamine (UDP-GlcNAc). The C-terminal domain catalyzes the transfer of acetyl group from acetyl coenzyme A to glucosamine-1-phosphate (GlcN-1-P) to produce N-acetylglucosamine-1-phosphate (GlcNAc-1-P), which is converted into UDP-GlcNAc by the transfer of uridine 5-monophosphate (from uridine 5-triphosphate), a reaction catalyzed by the N-terminal domain. The protein is Bifunctional protein GlmU of Hydrogenovibrio crunogenus (strain DSM 25203 / XCL-2) (Thiomicrospira crunogena).